The primary structure comprises 278 residues: MVGEFRWQAGRPATAQVGGWVLAHCQQRFLQDDNGLLFPREWLKRQELPLLAEHGVGHWQGEPVYVLELDEPIELPGMAWAPLRQFMLHGDFDQFCMLGYASQIGIWARHNRFCGNCGTRMQAQDHERVMQCPQCGLHQYPRLSPSMIVLVTRGDEVLLARSPRFVPGVYSTLAGFVEAGESVEQCVVREVREEVGVEVANLEYIGSQNWPFPHSLMLGFHAEYVSGEIVPQEDEIEDAQWFSLDALPPLPAQRSIARHLIDLYLARRSGAAEPVLPG.

Residue Arg84 participates in substrate binding. Zn(2+) is bound by residues Cys114 and Cys117. Residue Glu127 coordinates substrate. 2 residues coordinate Zn(2+): Cys132 and Cys135. Substrate is bound at residue Tyr140. The region spanning Pro141 to Leu265 is the Nudix hydrolase domain. Ala174, Glu190, and Glu194 together coordinate a divalent metal cation. A Nudix box motif is present at residues Gly175–Gly196. Gln208 to Ser215 contacts substrate. Residue Glu235 participates in a divalent metal cation binding. Ala257 serves as a coordination point for substrate.

Belongs to the Nudix hydrolase family. NudC subfamily. In terms of assembly, homodimer. Mg(2+) is required as a cofactor. Requires Mn(2+) as cofactor. It depends on Zn(2+) as a cofactor.

The enzyme catalyses a 5'-end NAD(+)-phospho-ribonucleoside in mRNA + H2O = a 5'-end phospho-adenosine-phospho-ribonucleoside in mRNA + beta-nicotinamide D-ribonucleotide + 2 H(+). It carries out the reaction NAD(+) + H2O = beta-nicotinamide D-ribonucleotide + AMP + 2 H(+). It catalyses the reaction NADH + H2O = reduced beta-nicotinamide D-ribonucleotide + AMP + 2 H(+). MRNA decapping enzyme that specifically removes the nicotinamide adenine dinucleotide (NAD) cap from a subset of mRNAs by hydrolyzing the diphosphate linkage to produce nicotinamide mononucleotide (NMN) and 5' monophosphate mRNA. The NAD-cap is present at the 5'-end of some mRNAs and stabilizes RNA against 5'-processing. Has preference for mRNAs with a 5'-end purine. Catalyzes the hydrolysis of a broad range of dinucleotide pyrophosphates. This Pseudomonas aeruginosa (strain LESB58) protein is NAD-capped RNA hydrolase NudC.